The sequence spans 146 residues: Hemoglobin subunit beta (146 aa).

The 145-residue stretch at 2–146 folds into the Globin domain; the sequence is HWTAEEKQLI…VAHALARKYH (145 aa). Residues H63 and H92 each coordinate heme b.

It belongs to the globin family. Heterotetramer of two alpha chains and two beta chains. As to expression, red blood cells.

Involved in oxygen transport from the lung to the various peripheral tissues. The protein is Hemoglobin subunit beta (HBB) of Anas platyrhynchos platyrhynchos (Northern mallard).